Here is a 227-residue protein sequence, read N- to C-terminus: Cytochrome c oxidase subunit 2 (227 aa).

Residues 1–14 (MAHAAQVGLQDATS) lie on the Mitochondrial intermembrane side of the membrane. Residues 15–45 (PIMEELIIFHDHALMIIFLICFLVLYALFLT) traverse the membrane as a helical segment. Residues 46 to 59 (LTTKLTSTNISDAQ) are Mitochondrial matrix-facing. Residues 60–87 (EMETVWTILPAIILVLIALPSLRILYMT) form a helical membrane-spanning segment. The Mitochondrial intermembrane portion of the chain corresponds to 88 to 227 (DEINDPSFTI…IFEMGPVFTL (140 aa)). Residues H161, C196, E198, C200, H204, and M207 each contribute to the Cu cation site. E198 is a Mg(2+) binding site.

The protein belongs to the cytochrome c oxidase subunit 2 family. As to quaternary structure, component of the cytochrome c oxidase (complex IV, CIV), a multisubunit enzyme composed of 14 subunits. The complex is composed of a catalytic core of 3 subunits MT-CO1, MT-CO2 and MT-CO3, encoded in the mitochondrial DNA, and 11 supernumerary subunits COX4I, COX5A, COX5B, COX6A, COX6B, COX6C, COX7A, COX7B, COX7C, COX8 and NDUFA4, which are encoded in the nuclear genome. The complex exists as a monomer or a dimer and forms supercomplexes (SCs) in the inner mitochondrial membrane with NADH-ubiquinone oxidoreductase (complex I, CI) and ubiquinol-cytochrome c oxidoreductase (cytochrome b-c1 complex, complex III, CIII), resulting in different assemblies (supercomplex SCI(1)III(2)IV(1) and megacomplex MCI(2)III(2)IV(2)). Found in a complex with TMEM177, COA6, COX18, COX20, SCO1 and SCO2. Interacts with TMEM177 in a COX20-dependent manner. Interacts with COX20. Interacts with COX16. Cu cation is required as a cofactor.

The protein resides in the mitochondrion inner membrane. The enzyme catalyses 4 Fe(II)-[cytochrome c] + O2 + 8 H(+)(in) = 4 Fe(III)-[cytochrome c] + 2 H2O + 4 H(+)(out). Functionally, component of the cytochrome c oxidase, the last enzyme in the mitochondrial electron transport chain which drives oxidative phosphorylation. The respiratory chain contains 3 multisubunit complexes succinate dehydrogenase (complex II, CII), ubiquinol-cytochrome c oxidoreductase (cytochrome b-c1 complex, complex III, CIII) and cytochrome c oxidase (complex IV, CIV), that cooperate to transfer electrons derived from NADH and succinate to molecular oxygen, creating an electrochemical gradient over the inner membrane that drives transmembrane transport and the ATP synthase. Cytochrome c oxidase is the component of the respiratory chain that catalyzes the reduction of oxygen to water. Electrons originating from reduced cytochrome c in the intermembrane space (IMS) are transferred via the dinuclear copper A center (CU(A)) of subunit 2 and heme A of subunit 1 to the active site in subunit 1, a binuclear center (BNC) formed by heme A3 and copper B (CU(B)). The BNC reduces molecular oxygen to 2 water molecules using 4 electrons from cytochrome c in the IMS and 4 protons from the mitochondrial matrix. The sequence is that of Cytochrome c oxidase subunit 2 (MT-CO2) from Gorilla gorilla beringei (Mountain gorilla).